Consider the following 453-residue polypeptide: GTPase Der (453 aa).

2 EngA-type G domains span residues 3-167 (PIIV…INSK) and 188-361 (VKIA…HTSQ). Residues 9 to 16 (GRTNVGKS), 57 to 61 (DTAGI), 119 to 122 (NKID), 194 to 201 (GKPNVGKS), 241 to 245 (DTAGM), and 306 to 309 (NKCD) contribute to the GTP site. The KH-like domain occupies 362–446 (KKIKTSQVMK…PIKIQFKETM (85 aa)).

It belongs to the TRAFAC class TrmE-Era-EngA-EngB-Septin-like GTPase superfamily. EngA (Der) GTPase family. In terms of assembly, associates with the 50S ribosomal subunit.

Functionally, GTPase that plays an essential role in the late steps of ribosome biogenesis. The protein is GTPase Der of Buchnera aphidicola subsp. Schizaphis graminum (strain Sg).